We begin with the raw amino-acid sequence, 1118 residues long: Protein argonaute 1B (1118 aa).

Disordered stretches follow at residues 1-175 (MALQ…SRTV) and 188-246 (APMV…RFPL). Positions 10–24 (PHHHQVPIMVKKKRT) are enriched in basic residues. Low complexity predominate over residues 25-35 (GSGSTGESSGE). 3 stretches are compositionally biased toward gly residues: residues 54–92 (QHGG…HHPG), 100–110 (GRGGPGSHHPG), and 118–128 (GRGGSGSHHPG). 2 stretches are compositionally biased toward low complexity: residues 148-157 (RGGMPQPYYG) and 193-219 (PTPS…QFQQ). The span at 220–241 (LATRDQSSTSQAIQIAPPSSKS) shows a compositional bias: polar residues. One can recognise a PAZ domain in the interval 457–570 (PVIDFVAQLL…LPMEVCKIVE (114 aa)). Residues 746 to 1067 (LLIVILPDNN…AAFRARFYME (322 aa)) form the Piwi domain.

The protein belongs to the argonaute family. Ago subfamily.

Probably involved in the RNA silencing pathway. May bind to short RNAs such as microRNAs (miRNAs) or short interfering RNAs (siRNAs), and represses the translation of mRNAs which are complementary to them. This chain is Protein argonaute 1B (AGO1B), found in Oryza sativa subsp. japonica (Rice).